The sequence spans 122 residues: Protein preY, mitochondrial (122 aa).

A mitochondrion-targeting transit peptide spans 1–40 (MLAVRAWGRTYNTLVQRKLNAACPTGALPAVTLRPLHCSL). Residues 56-102 (DPTLLQFLVCPLSRKSLRYEESTNELINDELGIAYPIVDGIPNMIPQ) form the TRM112 domain.

It belongs to the PREY family.

Its subcellular location is the mitochondrion. Its function is as follows. In mitochondria, S-adenosylmethionine-dependent methyltransferase chaperone that supports both coenzyme Q biosynthesis and NADH:ubiquinone oxidoreductase complex (complex I, MT-ND1) assembly. The protein is Protein preY, mitochondrial (pyurf) of Xenopus tropicalis (Western clawed frog).